Here is an 80-residue protein sequence, read N- to C-terminus: Putative membrane protein insertion efficiency factor (80 aa).

Belongs to the UPF0161 family.

It localises to the cell inner membrane. Its function is as follows. Could be involved in insertion of integral membrane proteins into the membrane. This chain is Putative membrane protein insertion efficiency factor, found in Paracoccus denitrificans (strain Pd 1222).